Reading from the N-terminus, the 348-residue chain is tRNA N6-adenosine threonylcarbamoyltransferase (348 aa).

The Fe cation site is built by His109 and His113. Substrate is bound by residues 136–140 (TVSGG), Asp169, Gly182, Asp186, and Asn284. A Fe cation-binding site is contributed by Asp312.

This sequence belongs to the KAE1 / TsaD family. Fe(2+) is required as a cofactor.

It is found in the cytoplasm. The enzyme catalyses L-threonylcarbamoyladenylate + adenosine(37) in tRNA = N(6)-L-threonylcarbamoyladenosine(37) in tRNA + AMP + H(+). Required for the formation of a threonylcarbamoyl group on adenosine at position 37 (t(6)A37) in tRNAs that read codons beginning with adenine. Is involved in the transfer of the threonylcarbamoyl moiety of threonylcarbamoyl-AMP (TC-AMP) to the N6 group of A37, together with TsaE and TsaB. TsaD likely plays a direct catalytic role in this reaction. In Chlorobium luteolum (strain DSM 273 / BCRC 81028 / 2530) (Pelodictyon luteolum), this protein is tRNA N6-adenosine threonylcarbamoyltransferase.